A 186-amino-acid polypeptide reads, in one-letter code: TATA-box-binding protein E (186 aa).

Repeat copies occupy residues 10–86 and 101–179.

It belongs to the TBP family.

In terms of biological role, general factor that plays a role in the activation of archaeal genes transcribed by RNA polymerase. Binds specifically to the TATA box promoter element which lies close to the position of transcription initiation. The protein is TATA-box-binding protein E (tbpE) of Halobacterium salinarum (strain ATCC 700922 / JCM 11081 / NRC-1) (Halobacterium halobium).